The sequence spans 266 residues: MSFFDSVKLDLVGRLFGIRNRGLAVTCCAVAVASIIAFPYIRRDYQTFLSGGPSYAPQNIRGYLIVCVLALFRQEQKGLAIYDRLPEKRRWLPDLPPRDGPRPITTSHIIQRQRNQAPDLKFALEELKATVIPRVQARHTDLTHLSLSKFEFHAEAIFLLPSVPIDDPKNVPSHDTVRRTKREIAHMHDYHDYTLHLALAAQDGKEVVSKGWGQRHPLAGPGVPGPPTEWTFIYAPRNEEELAVVEMIIEASIGYMTNDPAGKTIA.

The helical transmembrane segment at 22–41 (GLAVTCCAVAVASIIAFPYI) threads the bilayer.

This sequence belongs to the fungal luciferase family.

It is found in the membrane. The catalysed reaction is 3-hydroxyhispidin + O2 = (E)-caffeoylpyruvate + hnu + CO2. It catalyses the reaction 3-hydroxyhispidin + O2 = 4-[(E)-2-(3,4-dihydroxyphenyl)ethenyl]-1,7-dihydroxy-2,3,5-trioxabicyclo[2.2.2]oct-7-en-6-one. In terms of biological role, luciferase; part of the gene cluster that mediates the fungal bioluminescence cycle. Uses the fungal luciferin 3-hydroxyhispidin as a substrate to produce an endoperoxide as a high-energy intermediate with decomposition that yields oxyluciferin (also known as caffeoylpyruvate) and light emission. The fungal bioluminescence cycle begins with the hispidin synthetase that catalyzes the formation of hispidin which is further hydroxylated by the hispidin-3-hydroxylase, yielding the fungal luciferin 3-hydroxyhispidin. The luciferase then produces an endoperoxide as a high-energy intermediate with decomposition that yields oxyluciferin and light emission. Oxyluciferin can be recycled to caffeic acid by caffeoylpyruvate hydrolase. In Armillaria mellea (Honey mushroom), this protein is Luciferase.